Reading from the N-terminus, the 348-residue chain is QIGVCYGMMGNNLPSANEVINLYRSNNIRRMRLYDPNQAALQALRNSGIELILGVPNSDLQGLATNADTARQWVQRNVLNFWPSVKIKYIAVGNEVSPVGGSSWYAQYVLPAVQNVYQAVRAQGLHDQIKVSTAIDMTLIGNSYPPSQGSFRGDVRSYLDPIIGYLLYASAPLHVNVYPYFSYSGNPRDISLPYALFTSPNVVVRDGQYGYQNLFDAMLDSVHAAIDNTRIGYVEVVVSESGWPSDGGFGATYDNARVYLDNLVRRAGRGSPRRPSKPTETYIFAMFDENQKSPEIEKHFGLFKPSKEKKYPFGFGAQRMQRLLLMSSMQHIPLRVTCKLEPSSQSLL.

Position 1 is a pyrrolidone carboxylic acid (glutamine 1). Glutamate 95 serves as the catalytic Proton donor. Glutamate 240 serves as the catalytic Nucleophile. Residues 317–348 constitute a propeptide, removed in mature form; the sequence is AQRMQRLLLMSSMQHIPLRVTCKLEPSSQSLL.

The protein belongs to the glycosyl hydrolase 17 family.

The protein resides in the vacuole. The catalysed reaction is Hydrolysis of (1-&gt;3)-beta-D-glucosidic linkages in (1-&gt;3)-beta-D-glucans.. Its function is as follows. Implicated in the defense of plants against pathogens. The polypeptide is Glucan endo-1,3-beta-glucosidase, basic isoform (Phaseolus vulgaris (Kidney bean)).